Here is an 89-residue protein sequence, read N- to C-terminus: Acyl-CoA-binding protein (89 aa).

One can recognise an ACB domain in the interval 3–88; that stretch reads LKEEFEEHAE…VKQLFEAAGS (86 aa). An acyl-CoA contacts are provided by residues 30–34, K56, and Y75; that span reads YGLYK.

It belongs to the ACBP family.

Binds medium- and long-chain acyl-CoA esters with very high affinity and may function as an intracellular carrier of acyl-CoA esters. The polypeptide is Acyl-CoA-binding protein (Gossypium hirsutum (Upland cotton)).